The primary structure comprises 441 residues: Alpha-methylserine aldolase (441 aa).

N6-(pyridoxal phosphate)lysine is present on lysine 256.

This sequence belongs to the SHMT family. Alpha-methylserine aldolase subfamily. As to quaternary structure, homodimer. Pyridoxal 5'-phosphate is required as a cofactor.

It catalyses the reaction 2-methyl-L-serine = formaldehyde + L-alanine. In terms of biological role, catalyzes the reversible interconversion of alpha-methyl-L-serine to L-alanine and formaldehyde. This chain is Alpha-methylserine aldolase, found in Variovorax paradoxus.